Reading from the N-terminus, the 529-residue chain is BTB/POZ domain-containing protein 6 (529 aa).

The region spanning 127 to 197 (ADVHFIVGPA…LYSDEIDLEA (71 aa)) is the BTB domain.

As to quaternary structure, homodimer and heterodimer. Interacts with cul3 via the BTB domain.

It localises to the cytoplasm. Adapter protein for the cul3 E3 ubiquitin-protein ligase complex. Involved in late neuronal development and muscle formation. The chain is BTB/POZ domain-containing protein 6 (btbd6) from Xenopus tropicalis (Western clawed frog).